The chain runs to 431 residues: Histidinol dehydrogenase (431 aa).

Residues Y130, Q191, and N214 each coordinate NAD(+). Residues S237, Q259, and H262 each contribute to the substrate site. Zn(2+) contacts are provided by Q259 and H262. Catalysis depends on proton acceptor residues E327 and H328. The substrate site is built by H328, D361, E415, and H420. D361 is a Zn(2+) binding site. H420 provides a ligand contact to Zn(2+).

Belongs to the histidinol dehydrogenase family. Requires Zn(2+) as cofactor.

The enzyme catalyses L-histidinol + 2 NAD(+) + H2O = L-histidine + 2 NADH + 3 H(+). The protein operates within amino-acid biosynthesis; L-histidine biosynthesis; L-histidine from 5-phospho-alpha-D-ribose 1-diphosphate: step 9/9. Functionally, catalyzes the sequential NAD-dependent oxidations of L-histidinol to L-histidinaldehyde and then to L-histidine. The polypeptide is Histidinol dehydrogenase (Syntrophotalea carbinolica (strain DSM 2380 / NBRC 103641 / GraBd1) (Pelobacter carbinolicus)).